Here is a 111-residue protein sequence, read N- to C-terminus: Integration host factor subunit alpha (111 aa).

The protein belongs to the bacterial histone-like protein family. As to quaternary structure, heterodimer of an alpha and a beta chain.

Functionally, this protein is one of the two subunits of integration host factor, a specific DNA-binding protein that functions in genetic recombination as well as in transcriptional and translational control. This is Integration host factor subunit alpha from Chelativorans sp. (strain BNC1).